A 335-amino-acid chain; its full sequence is Probable cytosolic iron-sulfur protein assembly protein Ciao1 (335 aa).

WD repeat units follow at residues 12 to 51 (GHKG…WSTK), 57 to 96 (GHKR…FECN), 101 to 140 (GHEN…EFEC), 146 to 185 (SHTQ…NDWD), 192 to 231 (SHTS…NSAG), 250 to 289 (QHSR…KPDE), and 301 to 335 (AHDQ…KVTE).

It belongs to the WD repeat CIA1 family.

Essential component of the cytosolic iron-sulfur (Fe/S) protein assembly machinery. Required for the maturation of extramitochondrial Fe/S proteins. The sequence is that of Probable cytosolic iron-sulfur protein assembly protein Ciao1 from Drosophila yakuba (Fruit fly).